Here is a 550-residue protein sequence, read N- to C-terminus: Cochlin (550 aa).

Positions 1-24 are cleaved as a signal peptide; it reads MSAAWIPALGLGVCLLLLPGPAGS. One can recognise an LCCL domain in the interval 28–121; that stretch reads APIAITCFTR…QMLSRWSASF (94 aa). Cystine bridges form between Cys-34-Cys-50 and Cys-54-Cys-74. The N-linked (GlcNAc...) asparagine glycan is linked to Asn-100. The segment covering 128 to 139 has biased composition (polar residues); the sequence is SSTQEATGQAVS. The disordered stretch occupies residues 128-159; that stretch reads SSTQEATGQAVSTAHPPTGKRLKKTPEKKTGN. VWFA domains follow at residues 165–346 and 367–537; these read DIAF…VKPL and NIAF…VSDV. Asn-221 is a glycosylation site (N-linked (GlcNAc...) asparagine).

In terms of assembly, monomer. May form homodimer. Interacts with type II collagen. Interacts with SLC44A2. Interacts with ANXA2. In terms of processing, N-glycosylated. Post-translationally, a 50 kDa form is created by proteolytic cleavage. In terms of tissue distribution, expressed in inner ear structures; the cochlea and the vestibule.

It is found in the secreted. It localises to the extracellular space. Its subcellular location is the extracellular matrix. In terms of biological role, plays a role in the control of cell shape and motility in the trabecular meshwork. The polypeptide is Cochlin (COCH) (Homo sapiens (Human)).